The chain runs to 151 residues: Large ribosomal subunit protein bL9 (151 aa).

This sequence belongs to the bacterial ribosomal protein bL9 family.

In terms of biological role, binds to the 23S rRNA. This Mycolicibacterium gilvum (strain PYR-GCK) (Mycobacterium gilvum (strain PYR-GCK)) protein is Large ribosomal subunit protein bL9.